Here is a 194-residue protein sequence, read N- to C-terminus: Peptidyl-tRNA hydrolase (194 aa).

Y17 provides a ligand contact to tRNA. Catalysis depends on H22, which acts as the Proton acceptor. TRNA contacts are provided by F68, N70, and N116.

Belongs to the PTH family. As to quaternary structure, monomer.

Its subcellular location is the cytoplasm. The catalysed reaction is an N-acyl-L-alpha-aminoacyl-tRNA + H2O = an N-acyl-L-amino acid + a tRNA + H(+). Hydrolyzes ribosome-free peptidyl-tRNAs (with 1 or more amino acids incorporated), which drop off the ribosome during protein synthesis, or as a result of ribosome stalling. Its function is as follows. Catalyzes the release of premature peptidyl moieties from peptidyl-tRNA molecules trapped in stalled 50S ribosomal subunits, and thus maintains levels of free tRNAs and 50S ribosomes. This is Peptidyl-tRNA hydrolase from Glaesserella parasuis serovar 5 (strain SH0165) (Haemophilus parasuis).